The chain runs to 299 residues: MDPEGLALLLPPATLATLADSWLREDCPGLNPVALVTGAAPSQAVLWAKSPGVLAGRPFFDAIFAQVNCQVSWFLPEGSKLVPVAKVAEVQGPAHCLLLGERVALNMLARCSGVASAAATAVETARGTGWAGHVAGTRKTTPGFRLVEKYGLLVGGATSHRYDLGGLVMVKDNHVVAAGGVEQAVQGARRAANFALKVEVECSSLQEALEAAEAGADLVLLDNFRPEELHPTAAALKAQFPTVGVEASGGVTLDNLPQFCGPHIDVISLGMLTQAAPALDFSLKLFAEGTTPVPYARKS.

Residues 8–12 (LLLPP) form an important for hexamer formation region. Quinolinate contacts are provided by residues R102, 138–139 (RK), 160–161 (HR), K171, E201, D222, 248–250 (SGG), and G270.

This sequence belongs to the NadC/ModD family. As to quaternary structure, hexamer formed by 3 homodimers.

It carries out the reaction nicotinate beta-D-ribonucleotide + CO2 + diphosphate = quinolinate + 5-phospho-alpha-D-ribose 1-diphosphate + 2 H(+). It participates in cofactor biosynthesis; NAD(+) biosynthesis; nicotinate D-ribonucleotide from quinolinate: step 1/1. In terms of biological role, involved in the catabolism of quinolinic acid (QA). This chain is Nicotinate-nucleotide pyrophosphorylase [carboxylating], found in Sus scrofa (Pig).